Here is a 410-residue protein sequence, read N- to C-terminus: Neuroserpin (410 aa).

A signal peptide spans 1–16; it reads MAYLGLLSLVALQSLV. Ser-83 is subject to Phosphoserine. Asn-157, Asn-321, and Asn-401 each carry an N-linked (GlcNAc...) asparagine glycan. Residue Ser-403 is glycosylated (O-linked (Xyl...) (chondroitin sulfate) serine).

It belongs to the serpin family. In terms of tissue distribution, detected in adult pituitary and adrenal gland.

The protein localises to the secreted. It is found in the cytoplasmic vesicle. The protein resides in the secretory vesicle lumen. It localises to the perikaryon. Its function is as follows. Serine protease inhibitor that inhibits plasminogen activators and plasmin but not thrombin. May be involved in the formation or reorganization of synaptic connections as well as for synaptic plasticity in the adult nervous system. May protect neurons from cell damage by tissue-type plasminogen activator. This is Neuroserpin (Serpini1) from Rattus norvegicus (Rat).